The chain runs to 75 residues: MSNTAPGPTVANKRDEKHRHVVNVVLELPTEISEATHPVLATMLSKYTRMSSLFNDKCAFKLDLLRMVAVSRTRR.

It belongs to the herpesviridae small capsomere-interacting protein family. As to quaternary structure, interacts with the major capsid protein/MCP.

The protein resides in the virion. It localises to the host nucleus. Functionally, participates in the assembly of the infectious particles by decorating the outer surface of the capsid shell and thus forming a layer between the capsid and the tegument. Complexes composed of the major capsid protein and small capsomere-interacting protein/SCP assemble together in the host cytoplasm and are translocated to the nucleus, where they accumulate and participate in capsid assembly. This Homo sapiens (Human) protein is Small capsomere-interacting protein.